The primary structure comprises 333 residues: 4-hydroxy-3-methylbut-2-enyl diphosphate reductase (333 aa).

Residue Cys20 coordinates [4Fe-4S] cluster. Residues His49 and His85 each contribute to the (2E)-4-hydroxy-3-methylbut-2-enyl diphosphate site. Dimethylallyl diphosphate is bound by residues His49 and His85. Isopentenyl diphosphate-binding residues include His49 and His85. Cys107 contacts [4Fe-4S] cluster. His135 contacts (2E)-4-hydroxy-3-methylbut-2-enyl diphosphate. Dimethylallyl diphosphate is bound at residue His135. His135 lines the isopentenyl diphosphate pocket. Catalysis depends on Glu137, which acts as the Proton donor. Thr176 provides a ligand contact to (2E)-4-hydroxy-3-methylbut-2-enyl diphosphate. Cys206 provides a ligand contact to [4Fe-4S] cluster. The (2E)-4-hydroxy-3-methylbut-2-enyl diphosphate site is built by Ser234, Ser235, Asn236, and Ser279. Ser234, Ser235, Asn236, and Ser279 together coordinate dimethylallyl diphosphate. Ser234, Ser235, Asn236, and Ser279 together coordinate isopentenyl diphosphate.

The protein belongs to the IspH family. It depends on [4Fe-4S] cluster as a cofactor.

It catalyses the reaction isopentenyl diphosphate + 2 oxidized [2Fe-2S]-[ferredoxin] + H2O = (2E)-4-hydroxy-3-methylbut-2-enyl diphosphate + 2 reduced [2Fe-2S]-[ferredoxin] + 2 H(+). The catalysed reaction is dimethylallyl diphosphate + 2 oxidized [2Fe-2S]-[ferredoxin] + H2O = (2E)-4-hydroxy-3-methylbut-2-enyl diphosphate + 2 reduced [2Fe-2S]-[ferredoxin] + 2 H(+). It functions in the pathway isoprenoid biosynthesis; dimethylallyl diphosphate biosynthesis; dimethylallyl diphosphate from (2E)-4-hydroxy-3-methylbutenyl diphosphate: step 1/1. Its pathway is isoprenoid biosynthesis; isopentenyl diphosphate biosynthesis via DXP pathway; isopentenyl diphosphate from 1-deoxy-D-xylulose 5-phosphate: step 6/6. Its function is as follows. Catalyzes the conversion of 1-hydroxy-2-methyl-2-(E)-butenyl 4-diphosphate (HMBPP) into a mixture of isopentenyl diphosphate (IPP) and dimethylallyl diphosphate (DMAPP). Acts in the terminal step of the DOXP/MEP pathway for isoprenoid precursor biosynthesis. This chain is 4-hydroxy-3-methylbut-2-enyl diphosphate reductase, found in Rhizobium leguminosarum bv. trifolii (strain WSM2304).